The primary structure comprises 252 residues: Probable phosphatase Shewmr4_2619 (252 aa).

Residues H8, H10, H16, H41, E74, H102, H132, D193, and H195 each contribute to the Zn(2+) site.

Belongs to the PHP family. Requires Zn(2+) as cofactor.

The polypeptide is Probable phosphatase Shewmr4_2619 (Shewanella sp. (strain MR-4)).